The chain runs to 305 residues: Probable GTP 3',8-cyclase (305 aa).

Positions 6–228 constitute a Radical SAM core domain; sequence NHRRPLVSLR…MTRKFMQDRK (223 aa). Residue R15 coordinates GTP. C22 and C26 together coordinate [4Fe-4S] cluster. Residue Y28 participates in S-adenosyl-L-methionine binding. Residue C29 coordinates [4Fe-4S] cluster. R62 is a GTP binding site. G66 contributes to the S-adenosyl-L-methionine binding site. T92 is a binding site for GTP. S116 is an S-adenosyl-L-methionine binding site. K153 is a GTP binding site. [4Fe-4S] cluster contacts are provided by C249 and C252. Residue 254–256 coordinates GTP; sequence RLR. C266 is a [4Fe-4S] cluster binding site.

It belongs to the radical SAM superfamily. MoaA family. [4Fe-4S] cluster serves as cofactor.

It carries out the reaction GTP + AH2 + S-adenosyl-L-methionine = (8S)-3',8-cyclo-7,8-dihydroguanosine 5'-triphosphate + 5'-deoxyadenosine + L-methionine + A + H(+). Its pathway is cofactor biosynthesis; molybdopterin biosynthesis. Functionally, catalyzes the cyclization of GTP to (8S)-3',8-cyclo-7,8-dihydroguanosine 5'-triphosphate. The protein is Probable GTP 3',8-cyclase of Methanothermobacter marburgensis (strain ATCC BAA-927 / DSM 2133 / JCM 14651 / NBRC 100331 / OCM 82 / Marburg) (Methanobacterium thermoautotrophicum).